Consider the following 1752-residue polypeptide: Chitin synthase E (1752 aa).

1–8 (GESGSGKT) contacts ATP. Residues 492 to 520 (SSKPLRMPSMARRKTSPSSRLAFDAGDAD) form a disordered region. The actin-binding stretch occupies residues 558–582 (LDIVNKCLSSTNLNPYFIFCLKPND). The next 2 helical transmembrane spans lie at 789-809 (WIALVYLLTFYIPDFAIKLFG) and 828-848 (LIIWFSCGVAIFFIVAFPGLV). A Cytochrome b5 heme-binding domain is found at 852–940 (QHVYSAAELS…LLDYRPTNIS (89 aa)). N-linked (GlcNAc...) asparagine glycans are attached at residues Asn938 and Asn963. The chain crosses the membrane as a helical span at residues 1099–1119 (FILAISVLICSIIVFKFLAAL). Asn1322, Asn1356, and Asn1462 each carry an N-linked (GlcNAc...) asparagine glycan. 3 helical membrane-spanning segments follow: residues 1494–1514 (LSTVIQPVTLAYIIYLIYWLV), 1520–1540 (IPYTSLILLAAIYGLQALIFI), and 1547–1567 (MVGWMIVYLLALPVFSLPCPS). Residue Asn1685 is glycosylated (N-linked (GlcNAc...) asparagine). The DEK-C domain maps to 1689–1744 (LPSDDAILAEIREILRTADLMSVTKKSIKLELERAFGVNLDLKRPYINSGKGYTFP).

The protein in the N-terminal section; belongs to the TRAFAC class myosin-kinesin ATPase superfamily. Myosin family. It in the C-terminal section; belongs to the chitin synthase family. Class V subfamily.

It localises to the cell membrane. It is found in the cell septum. Its subcellular location is the cell tip. The enzyme catalyses [(1-&gt;4)-N-acetyl-beta-D-glucosaminyl](n) + UDP-N-acetyl-alpha-D-glucosamine = [(1-&gt;4)-N-acetyl-beta-D-glucosaminyl](n+1) + UDP + H(+). In terms of biological role, polymerizes chitin, a structural polymer of the cell wall and septum, by transferring the sugar moiety of UDP-GlcNAc to the non-reducing end of the growing chitin polymer. Important for hyphal growth and conidiophore development but not pathogenicity. The sequence is that of Chitin synthase E from Aspergillus fumigatus (Neosartorya fumigata).